The sequence spans 345 residues: Alanine racemase (345 aa).

The active-site Proton acceptor; specific for D-alanine is K33. At K33 the chain carries N6-(pyridoxal phosphate)lysine. Residue R128 participates in substrate binding. Residue Y242 is the Proton acceptor; specific for L-alanine of the active site. M291 is a binding site for substrate.

It belongs to the alanine racemase family. Pyridoxal 5'-phosphate serves as cofactor.

It catalyses the reaction L-alanine = D-alanine. The protein operates within amino-acid biosynthesis; D-alanine biosynthesis; D-alanine from L-alanine: step 1/1. In terms of biological role, catalyzes the interconversion of L-alanine and D-alanine. May also act on other amino acids. The protein is Alanine racemase (alr) of Ruegeria sp. (strain TM1040) (Silicibacter sp.).